The sequence spans 209 residues: Ribosomal RNA large subunit methyltransferase E (209 aa).

Residues glycine 63, tryptophan 65, aspartate 83, aspartate 99, and aspartate 124 each coordinate S-adenosyl-L-methionine. Catalysis depends on lysine 164, which acts as the Proton acceptor.

It belongs to the class I-like SAM-binding methyltransferase superfamily. RNA methyltransferase RlmE family.

It localises to the cytoplasm. The catalysed reaction is uridine(2552) in 23S rRNA + S-adenosyl-L-methionine = 2'-O-methyluridine(2552) in 23S rRNA + S-adenosyl-L-homocysteine + H(+). Specifically methylates the uridine in position 2552 of 23S rRNA at the 2'-O position of the ribose in the fully assembled 50S ribosomal subunit. In Shewanella pealeana (strain ATCC 700345 / ANG-SQ1), this protein is Ribosomal RNA large subunit methyltransferase E.